Here is a 352-residue protein sequence, read N- to C-terminus: MLNVMDKFCWLYEKPTCQGQIKALPEHFIVKENLGFEFAGKGEHFMVKIRKVGENTKYVVNELAKACGVKSRDVSWAGLKDRHAVTEQWISVHLPGKADPDLTDFVAEHPGIEVLETTRHDKKLRPGDLVGNWFQIRLLDLTNPEELALKLEQVKMHGVPNYFGQQRFGHGGNNVIKARSWGNDEFRLRDKSKRSFYLSAARSWLFNMVLSTRIEQGSVNSLMVGDCLQNAGEDNCFLAESITEELQASIDKGLVNITAPLVGDNALPTAADAEAFELAIIANEPSLLKLICDNRMRHERRTLLLKPQEMEWQFDGNDVVLSFALPAGCFATSVVRELLVEQEGSTHANIDQ.

Catalysis depends on Asp-81, which acts as the Nucleophile. The region spanning 158 to 306 (GVPNYFGQQR…RHERRTLLLK (149 aa)) is the TRUD domain.

This sequence belongs to the pseudouridine synthase TruD family.

It catalyses the reaction uridine(13) in tRNA = pseudouridine(13) in tRNA. Functionally, responsible for synthesis of pseudouridine from uracil-13 in transfer RNAs. In Photobacterium profundum (strain SS9), this protein is tRNA pseudouridine synthase D.